Reading from the N-terminus, the 316-residue chain is tRNA dimethylallyltransferase (316 aa).

17-24 (GPTASGKT) contributes to the ATP binding site. 19 to 24 (TASGKT) is a substrate binding site. 3 interaction with substrate tRNA regions span residues 42–45 (DSAL), 166–170 (QRLSR), and 247–252 (RCVGYR).

It belongs to the IPP transferase family. In terms of assembly, monomer. It depends on Mg(2+) as a cofactor.

It catalyses the reaction adenosine(37) in tRNA + dimethylallyl diphosphate = N(6)-dimethylallyladenosine(37) in tRNA + diphosphate. Catalyzes the transfer of a dimethylallyl group onto the adenine at position 37 in tRNAs that read codons beginning with uridine, leading to the formation of N6-(dimethylallyl)adenosine (i(6)A). This Salmonella arizonae (strain ATCC BAA-731 / CDC346-86 / RSK2980) protein is tRNA dimethylallyltransferase.